Consider the following 449-residue polypeptide: Phosphoglucosamine mutase (449 aa).

Residue Ser-101 is the Phosphoserine intermediate of the active site. 4 residues coordinate Mg(2+): Ser-101, Asp-241, Asp-243, and Asp-245. Phosphoserine is present on Ser-101.

The protein belongs to the phosphohexose mutase family. Requires Mg(2+) as cofactor. Post-translationally, activated by phosphorylation.

It carries out the reaction alpha-D-glucosamine 1-phosphate = D-glucosamine 6-phosphate. In terms of biological role, catalyzes the conversion of glucosamine-6-phosphate to glucosamine-1-phosphate. The chain is Phosphoglucosamine mutase from Acetivibrio thermocellus (strain ATCC 27405 / DSM 1237 / JCM 9322 / NBRC 103400 / NCIMB 10682 / NRRL B-4536 / VPI 7372) (Clostridium thermocellum).